The chain runs to 350 residues: Thymidine kinase (350 aa).

15–22 is a binding site for ATP; it reads GAHGLGKT. Glutamate 44 functions as the Proton acceptor in the catalytic mechanism. Substrate is bound at residue glutamine 88. Residue arginine 178 participates in ATP binding. A substrate-binding site is contributed by arginine 184.

It belongs to the herpesviridae thymidine kinase family. Homodimer.

The enzyme catalyses thymidine + ATP = dTMP + ADP + H(+). Functionally, catalyzes the transfer of the gamma-phospho group of ATP to thymidine to generate dTMP in the salvage pathway of pyrimidine synthesis. The dTMP serves as a substrate for DNA polymerase during viral DNA replication. Allows the virus to be reactivated and to grow in non-proliferative cells lacking a high concentration of phosphorylated nucleic acid precursors. This chain is Thymidine kinase, found in Bos taurus (Bovine).